Here is a 223-residue protein sequence, read N- to C-terminus: Probable transaldolase (223 aa).

Lysine 91 (schiff-base intermediate with substrate) is an active-site residue.

The protein belongs to the transaldolase family. Type 3B subfamily.

Its subcellular location is the cytoplasm. The catalysed reaction is D-sedoheptulose 7-phosphate + D-glyceraldehyde 3-phosphate = D-erythrose 4-phosphate + beta-D-fructose 6-phosphate. It participates in carbohydrate degradation; pentose phosphate pathway; D-glyceraldehyde 3-phosphate and beta-D-fructose 6-phosphate from D-ribose 5-phosphate and D-xylulose 5-phosphate (non-oxidative stage): step 2/3. Functionally, transaldolase is important for the balance of metabolites in the pentose-phosphate pathway. In Prosthecochloris aestuarii (strain DSM 271 / SK 413), this protein is Probable transaldolase.